The primary structure comprises 105 residues: Transcriptional regulator SutA (105 aa).

Over residues 1–37 (MSEEELEQDELDGADEDDGEELAAADDGEADSSDGDE) the composition is skewed to acidic residues. The segment at 1-105 (MSEEELEQDE…PDSKYGSRPI (105 aa)) is disordered. Composition is skewed to basic and acidic residues over residues 59 to 83 (AKQK…KVQE) and 92 to 105 (PPKK…SRPI).

As to quaternary structure, interacts with RNA polymerase.

In terms of biological role, causes widespread changes in gene expression, and plays a direct role in the regulation of genes encoding ribosomal components. Associates with chromosomal DNA through interaction with RNA polymerase. Contributes to biofilm formation and secondary metabolite production. Important during transitions to and from the survival state. In Pseudomonas aeruginosa (strain UCBPP-PA14), this protein is Transcriptional regulator SutA.